Reading from the N-terminus, the 525-residue chain is NGFI-A-binding protein 2 (525 aa).

Positions 1–22 are disordered; sequence MHRAPSPTAEQPPGGGDSARRT. Ser-6 carries the phosphoserine modification. An NCD1 region spans residues 35–113; that stretch reads ALPRTLGELQ…REWATNPGLF (79 aa). The disordered stretch occupies residues 135-237; it reads GTRKGSMSNG…GGTGGGPDRL (103 aa). A phosphoserine mark is found at Ser-157, Ser-159, Ser-162, and Ser-171. The span at 212 to 234 shows a compositional bias: gly residues; the sequence is AGGGVPEGTGAGGLAAGGTGGGP. The interval 267-356 is NCD2; the sequence is LLKLNKKLAR…SRQVARESTY (90 aa). A necessary for nuclear localization region spans residues 353 to 384; that stretch reads ESTYLSSLKGSRLHPEELGGPPLKKLKQEVGE. Lys-379 is covalently cross-linked (Glycyl lysine isopeptide (Lys-Gly) (interchain with G-Cter in SUMO1)). Positions 380–416 are disordered; the sequence is QEVGEQSHPEIQQPPPGPESYVPPYRPSLEEDSASLS. Ser-479 is subject to Phosphoserine. The tract at residues 502 to 525 is disordered; it reads PGPHPALVEGRRSSVKVEAEASRQ. Over residues 510-525 the composition is skewed to basic and acidic residues; that stretch reads EGRRSSVKVEAEASRQ. A Glycyl lysine isopeptide (Lys-Gly) (interchain with G-Cter in SUMO1); alternate cross-link involves residue Lys-517. Residue Lys-517 forms a Glycyl lysine isopeptide (Lys-Gly) (interchain with G-Cter in SUMO2); alternate linkage.

It belongs to the NAB family. Homomultimers may associate with EGR1 bound to DNA. Post-translationally, sumoylation by EGR2 represses EGR2 transcriptional activity in hindbrain. In terms of tissue distribution, widely expressed at low levels. Highly expressed in melanoma cell lines.

Its subcellular location is the nucleus. Its function is as follows. Acts as a transcriptional repressor for zinc finger transcription factors EGR1 and EGR2. Isoform 2 lacks repression ability. The protein is NGFI-A-binding protein 2 (NAB2) of Homo sapiens (Human).